We begin with the raw amino-acid sequence, 292 residues long: MEMO1 family protein PF1638 (292 aa).

The protein belongs to the MEMO1 family.

This Pyrococcus furiosus (strain ATCC 43587 / DSM 3638 / JCM 8422 / Vc1) protein is MEMO1 family protein PF1638.